The sequence spans 122 residues: Large ribosomal subunit protein bL17 (122 aa).

The protein belongs to the bacterial ribosomal protein bL17 family. Part of the 50S ribosomal subunit. Contacts protein L32.

This Neisseria meningitidis serogroup C / serotype 2a (strain ATCC 700532 / DSM 15464 / FAM18) protein is Large ribosomal subunit protein bL17.